A 208-amino-acid chain; its full sequence is Porimin (208 aa).

The signal sequence occupies residues 1 to 26 (MGLGARGAWAALLLGTLQVLALLGAA). Over 27 to 166 (HESAAMAASA…EAKKGSKFDT (140 aa)) the chain is Extracellular. The span at 42–57 (GLPHNSSANSTETLQH) shows a compositional bias: polar residues. The disordered stretch occupies residues 42–125 (GLPHNSSANS…PKTTSVSQNT (84 aa)). Residues N46, N50, N64, N68, N83, N96, and N106 are each glycosylated (N-linked (GlcNAc...) asparagine). The span at 65–107 (ETSNSTVKPPTSVASDSSNTTVTTMKPTAASNTTTPGMVSTNM) shows a compositional bias: polar residues. A compositionally biased stretch (low complexity) spans 108-122 (TSTTLKSTPKTTSVS). N-linked (GlcNAc...) asparagine glycans are attached at residues N124 and N138. Residues 167 to 187 (GSFVGGIVLTLGVLSILYIGC) form a helical membrane-spanning segment. Topologically, residues 188 to 208 (KMYYSRRGIRYRTIDEHDAII) are cytoplasmic.

This sequence belongs to the CD164 family. Ubiquitous. Not expressed in ovary. Expressed in keratinocytes.

The protein resides in the membrane. In terms of biological role, implicated in oncotic cell death, characterized by cell swelling, organelle swelling, vacuolization and increased membrane permeability. This is Porimin (TMEM123) from Homo sapiens (Human).